We begin with the raw amino-acid sequence, 930 residues long: Serine/threonine-protein kinase PknD (930 aa).

Positions 4–291 (YDIIRMIGKG…ALKADIEQHL (288 aa)) constitute a Protein kinase domain. Residues 10-18 (IGKGGMGEV) and Lys-33 contribute to the ATP site. The Proton acceptor role is filled by Asp-138.

Belongs to the protein kinase superfamily. Ser/Thr protein kinase family. In terms of processing, autophosphorylated on serine and threonine residues.

It catalyses the reaction L-seryl-[protein] + ATP = O-phospho-L-seryl-[protein] + ADP + H(+). It carries out the reaction L-threonyl-[protein] + ATP = O-phospho-L-threonyl-[protein] + ADP + H(+). Its function is as follows. Together with the serine/threonine kinase Pkn1, may play a role in the specific interactions with host proteins during intracellular growth. This chain is Serine/threonine-protein kinase PknD, found in Chlamydia caviae (strain ATCC VR-813 / DSM 19441 / 03DC25 / GPIC) (Chlamydophila caviae).